A 122-amino-acid chain; its full sequence is Large ribosomal subunit protein bL12 (122 aa).

The protein belongs to the bacterial ribosomal protein bL12 family. In terms of assembly, homodimer. Part of the ribosomal stalk of the 50S ribosomal subunit. Forms a multimeric L10(L12)X complex, where L10 forms an elongated spine to which 2 to 4 L12 dimers bind in a sequential fashion. Binds GTP-bound translation factors.

Functionally, forms part of the ribosomal stalk which helps the ribosome interact with GTP-bound translation factors. Is thus essential for accurate translation. In Stenotrophomonas maltophilia (strain R551-3), this protein is Large ribosomal subunit protein bL12.